The following is a 452-amino-acid chain: Friend leukemia integration 1 transcription factor (452 aa).

Position 39 is a phosphoserine (S39). One can recognise a PNT domain in the interval 112-198 (PPPPNMTTNE…SHLSYLRESS (87 aa)). Positions 209–271 (DQSSRLSVKE…PYQILGPTSS (63 aa)) are disordered. A compositionally biased stretch (basic and acidic residues) spans 215–226 (SVKEDPSYDSVR). Over residues 248–257 (QTISKNTEQR) the composition is skewed to polar residues. Positions 281–361 (IQLWQFLLEL…HGKRYAYKFD (81 aa)) form a DNA-binding region, ETS. The disordered stretch occupies residues 433-452 (NPNVPRHPNTHVPSHLGSYY).

This sequence belongs to the ETS family. In terms of assembly, can form homodimers or heterodimers with ETV6/TEL1.

Its subcellular location is the nucleus. Functionally, sequence-specific transcriptional activator. Recognizes the DNA sequence 5'-C[CA]GGAAGT-3'. The chain is Friend leukemia integration 1 transcription factor (FLI1) from Homo sapiens (Human).